The sequence spans 293 residues: Pyridoxal 5'-phosphate synthase subunit PdxS (293 aa).

Aspartate 23 lines the D-ribose 5-phosphate pocket. Residue lysine 80 is the Schiff-base intermediate with D-ribose 5-phosphate of the active site. Glycine 152 lines the D-ribose 5-phosphate pocket. Arginine 164 is a binding site for D-glyceraldehyde 3-phosphate. Residues glycine 213 and 234-235 contribute to the D-ribose 5-phosphate site; that span reads GS.

This sequence belongs to the PdxS/SNZ family. As to quaternary structure, in the presence of PdxT, forms a dodecamer of heterodimers.

It catalyses the reaction aldehydo-D-ribose 5-phosphate + D-glyceraldehyde 3-phosphate + L-glutamine = pyridoxal 5'-phosphate + L-glutamate + phosphate + 3 H2O + H(+). It participates in cofactor biosynthesis; pyridoxal 5'-phosphate biosynthesis. In terms of biological role, catalyzes the formation of pyridoxal 5'-phosphate from ribose 5-phosphate (RBP), glyceraldehyde 3-phosphate (G3P) and ammonia. The ammonia is provided by the PdxT subunit. Can also use ribulose 5-phosphate and dihydroxyacetone phosphate as substrates, resulting from enzyme-catalyzed isomerization of RBP and G3P, respectively. The protein is Pyridoxal 5'-phosphate synthase subunit PdxS of Desulfovibrio desulfuricans (strain ATCC 27774 / DSM 6949 / MB).